A 431-amino-acid chain; its full sequence is Glutamyl-tRNA(Gln) amidotransferase subunit A (431 aa).

Active-site charge relay system residues include Lys37 and Ser112. Ser136 functions as the Acyl-ester intermediate in the catalytic mechanism.

Belongs to the amidase family. GatA subfamily. In terms of assembly, heterotrimer of A, B and C subunits.

The enzyme catalyses L-glutamyl-tRNA(Gln) + L-glutamine + ATP + H2O = L-glutaminyl-tRNA(Gln) + L-glutamate + ADP + phosphate + H(+). Allows the formation of correctly charged Gln-tRNA(Gln) through the transamidation of misacylated Glu-tRNA(Gln) in organisms which lack glutaminyl-tRNA synthetase. The reaction takes place in the presence of glutamine and ATP through an activated gamma-phospho-Glu-tRNA(Gln). The protein is Glutamyl-tRNA(Gln) amidotransferase subunit A of Methanospirillum hungatei JF-1 (strain ATCC 27890 / DSM 864 / NBRC 100397 / JF-1).